Here is a 310-residue protein sequence, read N- to C-terminus: Transcription initiation factor IIB (310 aa).

The segment at 9 to 41 (EKETKCPECGSDDLRGDYERAEIVCGKCGLVID) adopts a TFIIB-type zinc-finger fold. The Zn(2+) site is built by Cys14, Cys17, Cys33, and Cys36. Tandem repeats lie at residues 127-210 (SELD…TREL) and 221-302 (DYVP…ELTE).

Belongs to the TFIIB family.

Functionally, stabilizes TBP binding to an archaeal box-A promoter. Also responsible for recruiting RNA polymerase II to the pre-initiation complex (DNA-TBP-TFIIB). This Methanothermobacter thermautotrophicus (strain ATCC 29096 / DSM 1053 / JCM 10044 / NBRC 100330 / Delta H) (Methanobacterium thermoautotrophicum) protein is Transcription initiation factor IIB.